The primary structure comprises 214 residues: Holliday junction branch migration complex subunit RuvA (214 aa).

The segment at 1-63 is domain I; that stretch reads MISSLRGTVL…EDSLTLFGFP (63 aa). The domain II stretch occupies residues 64-139; the sequence is GPDELRAFEL…KLFVTQPRTR (76 aa). The segment at 139–143 is flexible linker; sequence RSASS. The tract at residues 144 to 214 is domain III; the sequence is AASTVTADVV…APAAAQAADR (71 aa).

Belongs to the RuvA family. As to quaternary structure, homotetramer. Forms an RuvA(8)-RuvB(12)-Holliday junction (HJ) complex. HJ DNA is sandwiched between 2 RuvA tetramers; dsDNA enters through RuvA and exits via RuvB. An RuvB hexamer assembles on each DNA strand where it exits the tetramer. Each RuvB hexamer is contacted by two RuvA subunits (via domain III) on 2 adjacent RuvB subunits; this complex drives branch migration. In the full resolvosome a probable DNA-RuvA(4)-RuvB(12)-RuvC(2) complex forms which resolves the HJ.

The protein localises to the cytoplasm. Its function is as follows. The RuvA-RuvB-RuvC complex processes Holliday junction (HJ) DNA during genetic recombination and DNA repair, while the RuvA-RuvB complex plays an important role in the rescue of blocked DNA replication forks via replication fork reversal (RFR). RuvA specifically binds to HJ cruciform DNA, conferring on it an open structure. The RuvB hexamer acts as an ATP-dependent pump, pulling dsDNA into and through the RuvAB complex. HJ branch migration allows RuvC to scan DNA until it finds its consensus sequence, where it cleaves and resolves the cruciform DNA. The protein is Holliday junction branch migration complex subunit RuvA of Clavibacter sepedonicus (Clavibacter michiganensis subsp. sepedonicus).